The primary structure comprises 66 residues: Beta-toxin ChFII.7 (66 aa).

One can recognise an LCN-type CS-alpha/beta domain in the interval 1–66 (KEGYLVNHST…VWPLPKKTCN (66 aa)). Disulfide bonds link Cys-12/Cys-65, Cys-16/Cys-41, Cys-25/Cys-46, and Cys-29/Cys-48. Asn-66 carries the post-translational modification Asparagine amide.

In terms of tissue distribution, expressed by the venom gland.

It localises to the secreted. Its function is as follows. Beta toxins bind voltage independently at site-4 of sodium channels (Nav) and shift the activation voltage toward more negative potentials, thereby affecting sodium channel activation CC and promoting spontaneous and repetitive firing. The sequence is that of Beta-toxin ChFII.7 from Centruroides hirsutipalpus (Scorpion).